The sequence spans 425 residues: Cytokine receptor-like factor 1 (425 aa).

The first 33 residues, 1 to 33 (MPAGRPGPVAQSARRPPRPLSSLWSPLLLCVLG), serve as a signal peptide directing secretion. The region spanning 35–134 (PRGGSGAHTA…SILAGSCLYV (100 aa)) is the Ig-like C2-type domain. Residues asparagine 95, asparagine 107, and asparagine 143 are each glycosylated (N-linked (GlcNAc...) asparagine). 2 Fibronectin type-III domains span residues 140 to 235 (KPFN…VLDV) and 240 to 344 (PPPD…TPRS). Cysteines 146 and 156 form a disulfide. An N-linked (GlcNAc...) asparagine glycan is attached at asparagine 171. Residues cysteine 187 and cysteine 198 are joined by a disulfide bond. A Phosphoserine modification is found at serine 222. A glycan (N-linked (GlcNAc...) asparagine) is linked at asparagine 295. The WSXWS motif signature appears at 330–334 (WSEWS). The segment at 335-366 (HPTAASTPRSERPGPGGGVCEPRGGEPSSGPV) is disordered. Asparagine 385 is a glycosylation site (N-linked (GlcNAc...) asparagine). Positions 402–425 (HKTRNQDEGILPSGRRGAARGPAG) are disordered. Positions 415 to 425 (GRRGAARGPAG) are enriched in low complexity.

The protein belongs to the type I cytokine receptor family. Type 3 subfamily. Forms covalent di- and tetramers. Forms a heteromeric complex with cardiotrophin-like cytokine CLCF1/CLC; the CRLF1-CLCF1 complex is a ligand for the ciliary neurotrophic factor receptor/CNTFR. The CRLF1-CLCF1 heterodimer, as well as tripartite signaling complex formed by CRLF1, CLCF1 and CNTFR bind SORL1 (via N-terminal ectodomain); within this complex, the interaction is mediated predominantly by the CRLF1 moiety. As to expression, widely expressed in the embryo. Not detected in the brain of adult mice.

The protein localises to the secreted. Functionally, in complex with CLCF1, forms a heterodimeric neurotropic cytokine that plays a crucial role during neuronal development. Plays a role in the initiation and/or maintenance of suckling in neonatal mice. May also play a regulatory role in the immune system. In Mus musculus (Mouse), this protein is Cytokine receptor-like factor 1 (Crlf1).